Here is a 334-residue protein sequence, read N- to C-terminus: Glyoxylate reductase (334 aa).

NADP(+)-binding positions include 158 to 161 (FGRI), 180 to 182 (SRT), and 239 to 241 (IAR). Catalysis depends on residues arginine 241 and glutamate 270. The active-site Proton donor is histidine 288. NADP(+) is bound at residue 288–290 (HIG).

The protein belongs to the D-isomer specific 2-hydroxyacid dehydrogenase family. GyaR subfamily. Homodimer.

The protein resides in the cytoplasm. It catalyses the reaction glycolate + NAD(+) = glyoxylate + NADH + H(+). The protein is Glyoxylate reductase of Thermococcus onnurineus (strain NA1).